Reading from the N-terminus, the 430-residue chain is Probable sugar isomerase mlr5709 (430 aa).

The Mn(2+) site is built by His257, Asp289, and Asp291.

This sequence belongs to the rhamnose isomerase family. Mn(2+) is required as a cofactor.

The chain is Probable sugar isomerase mlr5709 from Mesorhizobium japonicum (strain LMG 29417 / CECT 9101 / MAFF 303099) (Mesorhizobium loti (strain MAFF 303099)).